The primary structure comprises 1171 residues: DNA-directed RNA polymerase subunit beta (1171 aa).

It belongs to the RNA polymerase beta chain family. In terms of assembly, the RNAP catalytic core consists of 2 alpha, 1 beta, 1 beta' and 1 omega subunit. When a sigma factor is associated with the core the holoenzyme is formed, which can initiate transcription.

The enzyme catalyses RNA(n) + a ribonucleoside 5'-triphosphate = RNA(n+1) + diphosphate. Functionally, DNA-dependent RNA polymerase catalyzes the transcription of DNA into RNA using the four ribonucleoside triphosphates as substrates. The protein is DNA-directed RNA polymerase subunit beta of Corynebacterium efficiens (strain DSM 44549 / YS-314 / AJ 12310 / JCM 11189 / NBRC 100395).